Consider the following 433-residue polypeptide: Adenylosuccinate synthetase (433 aa).

GTP is bound by residues 12 to 18 (GDEGKGK) and 40 to 42 (GHT). The Proton acceptor role is filled by aspartate 13. The Mg(2+) site is built by aspartate 13 and glycine 40. IMP-binding positions include 13 to 16 (DEGK), 38 to 41 (NAGH), threonine 130, arginine 144, glutamine 225, threonine 240, and arginine 304. The active-site Proton donor is histidine 41. 300 to 306 (ATTGRPR) provides a ligand contact to substrate. Residues arginine 306, 332–334 (KLD), and 414–416 (SIG) each bind GTP.

This sequence belongs to the adenylosuccinate synthetase family. As to quaternary structure, homodimer. Mg(2+) serves as cofactor.

It is found in the cytoplasm. The enzyme catalyses IMP + L-aspartate + GTP = N(6)-(1,2-dicarboxyethyl)-AMP + GDP + phosphate + 2 H(+). It participates in purine metabolism; AMP biosynthesis via de novo pathway; AMP from IMP: step 1/2. Its function is as follows. Plays an important role in the de novo pathway of purine nucleotide biosynthesis. Catalyzes the first committed step in the biosynthesis of AMP from IMP. This Geobacter sulfurreducens (strain ATCC 51573 / DSM 12127 / PCA) protein is Adenylosuccinate synthetase.